A 256-amino-acid chain; its full sequence is Ribonuclease 3 (256 aa).

One can recognise an RNase III domain in the interval 3 to 125 (LDALQQRLGY…IFGAVFLDGG (123 aa)). Mg(2+) is bound at residue Glu-38. The active site involves Asp-42. 2 residues coordinate Mg(2+): Asp-111 and Glu-114. Glu-114 is an active-site residue. Residues 152-222 (DAKTLLQEYL…AKLALDEAHR (71 aa)) form the DRBM domain. The interval 226 to 256 (QLVKRSRAERTGKTRKQATPPDPQLSLRLKE) is disordered.

This sequence belongs to the ribonuclease III family. In terms of assembly, homodimer. It depends on Mg(2+) as a cofactor.

The protein resides in the cytoplasm. The enzyme catalyses Endonucleolytic cleavage to 5'-phosphomonoester.. Digests double-stranded RNA. Involved in the processing of primary rRNA transcript to yield the immediate precursors to the large and small rRNAs (23S and 16S). Processes some mRNAs, and tRNAs when they are encoded in the rRNA operon. Processes pre-crRNA and tracrRNA of type II CRISPR loci if present in the organism. The chain is Ribonuclease 3 from Ralstonia pickettii (strain 12J).